Reading from the N-terminus, the 313-residue chain is Oxaloacetate tautomerase Fahd2a, mitochondrial (313 aa).

The N-terminal 84 residues, 1 to 84, are a transit peptide targeting the mitochondrion; it reads MLGSGRRRLL…TALSVARRAL (84 aa). The Mg(2+) site is built by Glu159, Glu161, and Asp190. Position 202 is an N6-acetyllysine; alternate (Lys202). Lys202 carries the post-translational modification N6-succinyllysine; alternate. At Lys233 the chain carries N6-acetyllysine.

Belongs to the FAH family. Mg(2+) serves as cofactor. Requires Mn(2+) as cofactor.

It is found in the mitochondrion. The enzyme catalyses oxaloacetate = enol-oxaloacetate. Tautomerase that converts enol-oxaloacetate, a strong inhibitor of succinate dehydrogenase, to the physiological keto form of oxaloacetate. It is thereby required to maximize aerobic respiration efficiency by preventing succinate dehydrogenase inhibition. This chain is Oxaloacetate tautomerase Fahd2a, mitochondrial, found in Rattus norvegicus (Rat).